The chain runs to 414 residues: 2-acylphloroglucinol 4-prenyltransferase (414 aa).

A chloroplast-targeting transit peptide spans 1 to 86; that stretch reads MELSSVSSFS…LKPLSIFSCK (86 aa). A run of 8 helical transmembrane segments spans residues 153–173, 201–221, 229–249, 256–276, 281–301, 336–356, 359–379, and 394–414; these read FSWP…GSCF, ISVE…FILI, LLTS…VPPF, ITAF…VYYA, LGLA…ITFM, LLGT…AIIW, AFKS…LFFQ, and KSFY…YLFI.

The protein belongs to the UbiA prenyltransferase family. As to quaternary structure, component an active demethylxanthohumol (DMX) biosynthetic metabolon in glandular trichomes (lupulin glands) that encompasses a chalcone synthase (CHS) and a membrane-bound prenyltransferase. Interacts with PT2, forming a functional metabolon. Interacts with CHIL2; this interaction promotes catalytic activity. Mg(2+) is required as a cofactor. In terms of tissue distribution, expressed in trichomes.

The protein localises to the plastid. It localises to the chloroplast membrane. The enzyme catalyses 2',4,4',6'-tetrahydroxychalcone + dimethylallyl diphosphate = desmethylxanthohumol + diphosphate. It catalyses the reaction a 2-acylphloroglucinol + dimethylallyl diphosphate = a 2-acyl-4-prenylphloroglucinol + diphosphate. It functions in the pathway secondary metabolite biosynthesis. Its activity is regulated as follows. Stimulated by CHIL2 but inhibited by CHIL1. In terms of biological role, involved in the biosynthesis of prenylated phenolics natural products which contribute to the bitter taste of beer and display broad biological activities. Catalyzes the first prenylation step in the beta-bitter acid pathway. Uses dimethylallyl diphosphate (DMAPP) as the prenyl donor. This is 2-acylphloroglucinol 4-prenyltransferase from Humulus lupulus (European hop).